We begin with the raw amino-acid sequence, 383 residues long: Odorant receptor 94b (383 aa).

Over Met1–Tyr41 the chain is Cytoplasmic. The helical transmembrane segment at Pro42–Ile62 threads the bilayer. Topologically, residues Thr63 to Ala70 are extracellular. A helical transmembrane segment spans residues Gly71–Trp91. At Tyr92 to Arg130 the chain is on the cytoplasmic side. The helical transmembrane segment at Ile131 to Phe151 threads the bilayer. Topologically, residues Phe152 to Tyr174 are extracellular. The helical transmembrane segment at Phe175 to Leu195 threads the bilayer. Over Asp196–Glu250 the chain is Cytoplasmic. Residues Val251 to Ser271 form a helical membrane-spanning segment. The Extracellular segment spans residues Ala272–Pro284. The helical transmembrane segment at Gly285–Cys305 threads the bilayer. At Tyr306 to Glu358 the chain is on the cytoplasmic side. Residues Ile359–Leu379 form a helical membrane-spanning segment. Over Lys380–Lys383 the chain is Extracellular.

This sequence belongs to the insect chemoreceptor superfamily. Heteromeric odorant receptor channel (TC 1.A.69) family. Or2a subfamily. As to quaternary structure, interacts with Orco. Complexes exist early in the endomembrane system in olfactory sensory neurons (OSNs), coupling these complexes to the conserved ciliary trafficking pathway.

It localises to the cell membrane. Odorant receptor which mediates acceptance or avoidance behavior, depending on its substrates. The odorant receptor repertoire encodes a large collection of odor stimuli that vary widely in identity, intensity, and duration. May form a complex with Orco to form odorant-sensing units, providing sensitive and prolonged odorant signaling and calcium permeability. The chain is Odorant receptor 94b (Or94b) from Drosophila melanogaster (Fruit fly).